The primary structure comprises 354 residues: DNA polymerase IV (354 aa).

The 182-residue stretch at isoleucine 6 to glycine 187 folds into the UmuC domain. Residues aspartate 10 and aspartate 105 each coordinate Mg(2+). Glutamate 106 is a catalytic residue.

This sequence belongs to the DNA polymerase type-Y family. Monomer. The cofactor is Mg(2+).

It localises to the cytoplasm. The enzyme catalyses DNA(n) + a 2'-deoxyribonucleoside 5'-triphosphate = DNA(n+1) + diphosphate. In terms of biological role, poorly processive, error-prone DNA polymerase involved in untargeted mutagenesis. Copies undamaged DNA at stalled replication forks, which arise in vivo from mismatched or misaligned primer ends. These misaligned primers can be extended by PolIV. Exhibits no 3'-5' exonuclease (proofreading) activity. May be involved in translesional synthesis, in conjunction with the beta clamp from PolIII. In Pseudomonas putida (strain GB-1), this protein is DNA polymerase IV.